Reading from the N-terminus, the 116-residue chain is UPF0102 protein Neut_1662 (116 aa).

The protein belongs to the UPF0102 family.

The sequence is that of UPF0102 protein Neut_1662 from Nitrosomonas eutropha (strain DSM 101675 / C91 / Nm57).